Reading from the N-terminus, the 804-residue chain is Leucine--tRNA ligase (804 aa).

A 'HIGH' region motif is present at residues 40–51 (PYPSGAGLHVGH). Positions 576 to 580 (KMSKS) match the 'KMSKS' region motif. Position 579 (K579) interacts with ATP.

Belongs to the class-I aminoacyl-tRNA synthetase family.

The protein localises to the cytoplasm. It carries out the reaction tRNA(Leu) + L-leucine + ATP = L-leucyl-tRNA(Leu) + AMP + diphosphate. The sequence is that of Leucine--tRNA ligase from Staphylococcus aureus (strain Mu3 / ATCC 700698).